The following is a 379-amino-acid chain: Alcohol dehydrogenase class-3 (379 aa).

Zn(2+)-binding residues include C47, H69, C99, C102, C105, C113, and C176.

Belongs to the zinc-containing alcohol dehydrogenase family. Class-III subfamily. Homodimer. Zn(2+) is required as a cofactor.

The protein resides in the cytoplasm. The enzyme catalyses a primary alcohol + NAD(+) = an aldehyde + NADH + H(+). It catalyses the reaction a secondary alcohol + NAD(+) = a ketone + NADH + H(+). It carries out the reaction S-(hydroxymethyl)glutathione + NADP(+) = S-formylglutathione + NADPH + H(+). The catalysed reaction is S-(hydroxymethyl)glutathione + NAD(+) = S-formylglutathione + NADH + H(+). Class-III ADH is remarkably ineffective in oxidizing ethanol, but it readily catalyzes the oxidation of long-chain primary alcohols and the oxidation of S-(hydroxymethyl) glutathione. The protein is Alcohol dehydrogenase class-3 (adh5) of Dictyostelium discoideum (Social amoeba).